We begin with the raw amino-acid sequence, 896 residues long: MDVVGENEALQQFFEAQGANGTLGNPTLDTSLLEEFLGNDFDLGALQGQLPDTPPYSASDSCSPPQVKGACCPTLTPAARGTPAALLHSANAPGILPAHQSHSSSEMSNSGLPHRTFHNCYPDASHLMSPLDQSVSGGIGCSYHQQPLCHSPGVSLPPTKKRKCTQVLEDSGDCHVWTHHSRPMTGRSHSIEVQDLDSERQNMMLADQPSPALKWQPYRSVPWHSLLNSQYEKLPDVGYRVVTDKGFNFSPADEAFVCQKKNHFQITIHIQVWGSPKFVKTQMGLKPIEMFYLKPFGVKVEATNQIIAIEQSQADRSKKIFNPIKINLLADQVTKVTLGRLHFSETTANNMRKKGKPNPDQRYFMLVVGLYAANQDQFYLLSAHISERIIVRASNPGQFENDIDALWQRGQVPESVVCHGRVGINTDAPDEALVVCGNMKVMGTIMHPSDSRAKQNVQEVDTNEQLRRIAQMRIVEYDYKPEFASAMGINTAHQTGMIAQEVREILPRAVREVGDVTCENGETLENFLMVDKDQIFMENVGAVKQLCKLTNNLEERIEELEIWNRKLARLKRLSSSKSSASEASSISKFSRALSASSPKRTISKKNSKVSFSGKKQSCPNWVFQSLVITLIAVMAFCLKDQDRCTPSAPSSNLTSSQEPALPSTASPSAPNTTLATTLPSFQVPEITFCEILPCQQTYCCPIWGTRRGLSSPMQRQLEEQEPHQGPWAGRSTSFLAAEAQTNVDWRSDWIDTTISSIQIMEIQQIIDRRYCSRSLQCGSGNYYYHIPVNKYTPTNVKFSLEINTTEPLIVFQCKFTLGNMCFRSKIEAKGMESQQEVSQEMTQGYQHIWSLPVAPLFDSGYHFRVAAPDLADCSTDPYFAGKFFTDYFFYFYRHCV.

The segment at residues 111 to 403 (GLPHRTFHNC…SNPGQFENDI (293 aa)) is a DNA-binding region (NDT80). Positions 449–557 (SDSRAKQNVQ…KLTNNLEERI (109 aa)) constitute a Peptidase S74 domain. A coiled-coil region spans residues 541-573 (GAVKQLCKLTNNLEERIEELEIWNRKLARLKRL). The helical transmembrane segment at 622 to 638 (VFQSLVITLIAVMAFCL) threads the bilayer. Positions 648 to 658 (APSSNLTSSQE) are enriched in polar residues. Residues 648 to 672 (APSSNLTSSQEPALPSTASPSAPNT) are disordered. Positions 659 to 672 (PALPSTASPSAPNT) are enriched in low complexity.

The protein belongs to the MRF family.

It localises to the membrane. The polypeptide is Myelin regulatory factor-like protein (MYRFL) (Bos taurus (Bovine)).